The primary structure comprises 436 residues: Histidinol dehydrogenase (436 aa).

The NAD(+) site is built by Tyr136, Gln198, and Asn221. The substrate site is built by Ser244, Gln266, and His269. Residues Gln266 and His269 each contribute to the Zn(2+) site. Residues Glu334 and His335 each act as proton acceptor in the active site. Positions 335, 368, 422, and 427 each coordinate substrate. Asp368 serves as a coordination point for Zn(2+). Zn(2+) is bound at residue His427.

Belongs to the histidinol dehydrogenase family. The cofactor is Zn(2+).

The enzyme catalyses L-histidinol + 2 NAD(+) + H2O = L-histidine + 2 NADH + 3 H(+). Its pathway is amino-acid biosynthesis; L-histidine biosynthesis; L-histidine from 5-phospho-alpha-D-ribose 1-diphosphate: step 9/9. Catalyzes the sequential NAD-dependent oxidations of L-histidinol to L-histidinaldehyde and then to L-histidine. In Dehalococcoides mccartyi (strain CBDB1), this protein is Histidinol dehydrogenase.